The sequence spans 253 residues: uncharacterized protein (253 aa).

NADP(+) is bound by residues isoleucine 17, serine 36, aspartate 62, asparagine 89, tyrosine 158, lysine 162, valine 191, and threonine 193. Tyrosine 158 functions as the Proton donor in the catalytic mechanism. The active-site Lowers pKa of active site Tyr is the lysine 162.

This sequence belongs to the short-chain dehydrogenases/reductases (SDR) family.

Its subcellular location is the cytoplasm. It localises to the nucleus. This is an uncharacterized protein from Schizosaccharomyces pombe (strain 972 / ATCC 24843) (Fission yeast).